The primary structure comprises 118 residues: Basic phospholipase A2 PA-11 (118 aa).

7 disulfide bridges follow: C11–C71, C27–C117, C29–C45, C44–C98, C51–C91, C60–C84, and C78–C89. Residues Y28, G30, and G32 each coordinate Ca(2+). The active site involves H48. D49 is a Ca(2+) binding site. D92 is a catalytic residue.

This sequence belongs to the phospholipase A2 family. Group I subfamily. D49 sub-subfamily. Ca(2+) serves as cofactor. Expressed by the venom gland.

Its subcellular location is the secreted. The catalysed reaction is a 1,2-diacyl-sn-glycero-3-phosphocholine + H2O = a 1-acyl-sn-glycero-3-phosphocholine + a fatty acid + H(+). Its function is as follows. PLA2 catalyzes the calcium-dependent hydrolysis of the 2-acyl groups in 3-sn-phosphoglycerides. This chain is Basic phospholipase A2 PA-11, found in Pseudechis australis (Mulga snake).